A 249-amino-acid polypeptide reads, in one-letter code: MIT domain-containing protein 1 (249 aa).

The MIT domain occupies Q8 to G86. The tract at residues R168–R231 is important for association with membranes.

In terms of assembly, homodimer. Interacts (via MIT domain) with CHMP1A, CHMP1B, CHMP2A and IST1.

It localises to the late endosome membrane. It is found in the midbody. The protein resides in the membrane. Its function is as follows. Required for efficient abscission at the end of cytokinesis, together with components of the ESCRT-III complex. The chain is MIT domain-containing protein 1 (MITD1) from Homo sapiens (Human).